The chain runs to 358 residues: Small ribosomal subunit biogenesis GTPase RsgA 2 (358 aa).

The region spanning Ala-106–Ile-261 is the CP-type G domain. GTP-binding positions include Ser-151–Asp-154 and Gly-203–Thr-211. Zn(2+)-binding residues include Cys-284, Cys-289, His-291, and Cys-297.

The protein belongs to the TRAFAC class YlqF/YawG GTPase family. RsgA subfamily. In terms of assembly, monomer. Associates with 30S ribosomal subunit, binds 16S rRNA. Zn(2+) serves as cofactor.

It is found in the cytoplasm. Its function is as follows. One of several proteins that assist in the late maturation steps of the functional core of the 30S ribosomal subunit. Helps release RbfA from mature subunits. May play a role in the assembly of ribosomal proteins into the subunit. Circularly permuted GTPase that catalyzes slow GTP hydrolysis, GTPase activity is stimulated by the 30S ribosomal subunit. In Vibrio parahaemolyticus serotype O3:K6 (strain RIMD 2210633), this protein is Small ribosomal subunit biogenesis GTPase RsgA 2.